The chain runs to 107 residues: uncharacterized protein (107 aa).

At 1–4 (MSLV) the chain is on the cytoplasmic side. The helical transmembrane segment at 5-25 (IDIADTIVSLTALIGLIITLI) threads the bilayer. At 26–107 (KFHSQNKEDA…ELCRSSDRSK (82 aa)) the chain is on the extracellular side.

Its subcellular location is the host membrane. This is an uncharacterized protein from Acidianus sp. F28 (AFV-2).